Consider the following 570-residue polypeptide: Methyl-coenzyme M reductase subunit alpha (570 aa).

Gln161 serves as a coordination point for coenzyme F430. Coenzyme B contacts are provided by residues Arg239, 270 to 271 (KH), and Arg284. The residue at position 271 (His271) is a Pros-methylhistidine. The residue at position 285 (Arg285) is a 5-methylarginine. Tyr346 and Phe464 together coordinate coenzyme M. Gly465 bears the 1-thioglycine mark. Asp470 bears the (Z)-2,3-didehydroaspartate mark. Residue Cys472 is modified to S-methylcysteine.

This sequence belongs to the methyl-coenzyme M reductase alpha subunit family. In terms of assembly, MCR is a hexamer of two alpha, two beta, and two gamma chains, forming a dimer of heterotrimers. Coenzyme F430 is required as a cofactor. In terms of processing, the alpha subunit contains five modified amino acids near the active site region. Is methylated on His-271, Arg-285 and Cys-472, probably by the action of specific S-adenosylmethionine-dependent methyltransferases. Also contains a thioglycine at position 465, forming a thiopeptide bond. Contains a didehydroaspartate residue at position 470. The methylation on C5 of Arg-285 is a post-translational methylation not essential in vivo, but which plays a role for the stability and structural integrity of MCR. Does not show a methylation at Gln-420, as shown for M.marburgensis.

It is found in the cytoplasm. It catalyses the reaction coenzyme B + methyl-coenzyme M = methane + coenzyme M-coenzyme B heterodisulfide. It participates in one-carbon metabolism; methyl-coenzyme M reduction; methane from methyl-coenzyme M: step 1/1. In terms of biological role, component of the methyl-coenzyme M reductase (MCR) I that catalyzes the reductive cleavage of methyl-coenzyme M (CoM-S-CH3 or 2-(methylthio)ethanesulfonate) using coenzyme B (CoB or 7-mercaptoheptanoylthreonine phosphate) as reductant which results in the production of methane and the mixed heterodisulfide of CoB and CoM (CoM-S-S-CoB). This is the final step in methanogenesis. In Methanosarcina barkeri (strain Fusaro / DSM 804), this protein is Methyl-coenzyme M reductase subunit alpha (mcrA).